The primary structure comprises 605 residues: Probable potassium transport system protein Kup (605 aa).

The next 12 helical transmembrane spans lie at 18 to 38 (GLVF…IIAL), 46 to 66 (ILGI…LEYA), 97 to 117 (MAFV…DGVI), 138 to 158 (GLSQ…LFVF), 169 to 189 (AFGP…AISV), 204 to 224 (AISF…EVIL), 247 to 267 (AWYF…AFII), 287 to 307 (FYIP…QALI), 339 to 359 (IYIG…MLVF), 368 to 388 (AYGF…TMIF), 395 to 415 (WKVP…VSNC), and 418 to 438 (LPHG…VILI).

It belongs to the HAK/KUP transporter (TC 2.A.72) family.

It localises to the cell inner membrane. The catalysed reaction is K(+)(in) + H(+)(in) = K(+)(out) + H(+)(out). Its function is as follows. Transport of potassium into the cell. Likely operates as a K(+):H(+) symporter. This chain is Probable potassium transport system protein Kup, found in Pelobacter propionicus (strain DSM 2379 / NBRC 103807 / OttBd1).